Consider the following 371-residue polypeptide: Uroporphyrinogen decarboxylase (371 aa).

The span at 1-14 (MARWATMSTETTGT) shows a compositional bias: polar residues. Positions 1–30 (MARWATMSTETTGTGARDEGPRPGDPADSP) are disordered. Residues 49–53 (RQAGR), aspartate 98, tyrosine 173, serine 228, and histidine 342 contribute to the substrate site.

The protein belongs to the uroporphyrinogen decarboxylase family. Homodimer.

It localises to the cytoplasm. The catalysed reaction is uroporphyrinogen III + 4 H(+) = coproporphyrinogen III + 4 CO2. Its pathway is porphyrin-containing compound metabolism; protoporphyrin-IX biosynthesis; coproporphyrinogen-III from 5-aminolevulinate: step 4/4. Its function is as follows. Catalyzes the decarboxylation of four acetate groups of uroporphyrinogen-III to yield coproporphyrinogen-III. The protein is Uroporphyrinogen decarboxylase of Salinispora tropica (strain ATCC BAA-916 / DSM 44818 / JCM 13857 / NBRC 105044 / CNB-440).